A 217-amino-acid chain; its full sequence is ATP-binding protein BexA (217 aa).

One can recognise an ABC transporter domain in the interval 2 to 217 (IRVNNVCKKY…AYQYYNETQK (216 aa)). 38-45 (GRNGAGKS) contributes to the ATP binding site.

Belongs to the ABC transporter superfamily.

The protein resides in the cell inner membrane. Its function is as follows. Putative ATP-binding protein, and an energy-coupling component of capsule polysaccharide export apparatus. In Haemophilus influenzae, this protein is ATP-binding protein BexA (bexA).